Here is a 122-residue protein sequence, read N- to C-terminus: Large ribosomal subunit protein eL18 (122 aa).

The protein belongs to the eukaryotic ribosomal protein eL18 family.

This is Large ribosomal subunit protein eL18 from Picrophilus torridus (strain ATCC 700027 / DSM 9790 / JCM 10055 / NBRC 100828 / KAW 2/3).